The sequence spans 1360 residues: DNA-directed RNA polymerase subunit beta (1360 aa).

This sequence belongs to the RNA polymerase beta chain family. The RNAP catalytic core consists of 2 alpha, 1 beta, 1 beta' and 1 omega subunit. When a sigma factor is associated with the core the holoenzyme is formed, which can initiate transcription.

The catalysed reaction is RNA(n) + a ribonucleoside 5'-triphosphate = RNA(n+1) + diphosphate. DNA-dependent RNA polymerase catalyzes the transcription of DNA into RNA using the four ribonucleoside triphosphates as substrates. This is DNA-directed RNA polymerase subunit beta from Desulfotalea psychrophila (strain LSv54 / DSM 12343).